The chain runs to 234 residues: Probable plastid-lipid-associated protein 5, chloroplastic (234 aa).

Residues 1-45 (MALPWCLKTGVLTSPAAGFNHPSDSGFAVPTKLLSIRKGDRERLR) constitute a chloroplast transit peptide.

The protein belongs to the PAP/fibrillin family.

The protein resides in the plastid. Its subcellular location is the chloroplast thylakoid. This chain is Probable plastid-lipid-associated protein 5, chloroplastic (PAP5), found in Arabidopsis thaliana (Mouse-ear cress).